The following is a 300-amino-acid chain: Ribosomal protein bS6--L-glutamate ligase (300 aa).

An ATP-grasp domain is found at 104–287; it reads MQLLARQGID…IASKMIRWIE (184 aa). ATP-binding positions include lysine 141, 178–179, aspartate 187, and 211–213; these read EY and RSN. Mg(2+) is bound by residues aspartate 248, glutamate 260, and asparagine 262. Residues aspartate 248, glutamate 260, and asparagine 262 each contribute to the Mn(2+) site.

This sequence belongs to the RimK family. It depends on Mg(2+) as a cofactor. Mn(2+) serves as cofactor.

Its function is as follows. An L-glutamate ligase that catalyzes the ATP-dependent post-translational addition of glutamate residues to the C-terminus of ribosomal protein bS6 (RpsF). Is also able to catalyze the synthesis of poly-alpha-glutamate in vitro, via ATP hydrolysis from unprotected glutamate as substrate. The number of glutamate residues added to either RpsF or to poly-alpha-glutamate changes with pH. The polypeptide is Ribosomal protein bS6--L-glutamate ligase (Escherichia coli O81 (strain ED1a)).